Reading from the N-terminus, the 240-residue chain is Tumor protein p53-inducible nuclear protein 1 (240 aa).

Residues 25–37 carry the LIR motif; sequence EKEDDEWILVDFI.

As to quaternary structure, interacts with p53/TP53 and HIPK2. Interacts with PRKCG, GABARAP, GABARAPL1, GABARAPL2, MAP1LC3A, MAP1LC3B and MAP1LC3C. Ubiquitously expressed.

The protein localises to the cytoplasm. The protein resides in the cytosol. Its subcellular location is the nucleus. It is found in the PML body. It localises to the cytoplasmic vesicle. The protein localises to the autophagosome. Antiproliferative and proapoptotic protein involved in cell stress response which acts as a dual regulator of transcription and autophagy. Acts as a positive regulator of autophagy. In response to cellular stress or activation of autophagy, relocates to autophagosomes where it interacts with autophagosome-associated proteins GABARAP, GABARAPL1/L2, MAP1LC3A/B/C and regulates autophagy. Acts as an antioxidant and plays a major role in p53/TP53-driven oxidative stress response. Possesses both a p53/TP53-independent intracellular reactive oxygen species (ROS) regulatory function and a p53/TP53-dependent transcription regulatory function. Positively regulates p53/TP53 and p73/TP73 and stimulates their capacity to induce apoptosis and regulate cell cycle. In response to double-strand DNA breaks, promotes p53/TP53 phosphorylation on 'Ser-46' and subsequent apoptosis. Acts as a tumor suppressor by inducing cell death by an autophagy and caspase-dependent mechanism. Can reduce cell migration by regulating the expression of SPARC. This Homo sapiens (Human) protein is Tumor protein p53-inducible nuclear protein 1 (TP53INP1).